The primary structure comprises 170 residues: Bifunctional protein PyrR (170 aa).

The PRPP-binding signature appears at Leu-90–Thr-102.

It belongs to the purine/pyrimidine phosphoribosyltransferase family. PyrR subfamily.

It carries out the reaction UMP + diphosphate = 5-phospho-alpha-D-ribose 1-diphosphate + uracil. Functionally, regulates the transcription of the pyrimidine nucleotide (pyr) operon in response to exogenous pyrimidines. Also displays a weak uracil phosphoribosyltransferase activity which is not physiologically significant. This chain is Bifunctional protein PyrR, found in Pseudomonas aeruginosa (strain LESB58).